Here is a 427-residue protein sequence, read N- to C-terminus: UPF0229 protein YeaH (427 aa).

Residues 79–90 are compositionally biased toward basic and acidic residues; the sequence is NDHFVQNDRIER. The segment at 79–110 is disordered; the sequence is NDHFVQNDRIERPQGGGGGSGSGQGQASQDGE. Residues 92–102 show a composition bias toward gly residues; sequence QGGGGGSGSGQ.

Belongs to the UPF0229 family.

The protein is UPF0229 protein YeaH of Escherichia coli O139:H28 (strain E24377A / ETEC).